We begin with the raw amino-acid sequence, 827 residues long: Putative transcriptional regulatory protein C16G5.16 (827 aa).

The zn(2)-C6 fungal-type DNA-binding region spans 16 to 42 (CDECHRRKIKCDQRRPCSNCIAYNYEC). 3 disordered regions span residues 80-114 (LKLP…SSQD), 158-193 (TVPN…HKKP), and 794-827 (QPPS…KRTE). The span at 102–112 (KRSDSSKRSSS) shows a compositional bias: basic and acidic residues. Phosphoserine is present on Ser112. 2 stretches are compositionally biased toward low complexity: residues 159-179 (VPNP…LSFP) and 811-827 (SNNS…KRTE).

Belongs to the ASG1 family.

The protein localises to the cytoplasm. It is found in the nucleus. The protein is Putative transcriptional regulatory protein C16G5.16 of Schizosaccharomyces pombe (strain 972 / ATCC 24843) (Fission yeast).